The sequence spans 466 residues: Xanthine permease XanQ (466 aa).

Residues 1–44 (MSDINHAGSDLIFELEDRPPFHQALVGAITHLLAIFVPMVTPAL) are Cytoplasmic-facing. Residues 45 to 65 (IVGAALQLSAETTAYLVSMAM) traverse the membrane as a helical segment. Over 66–74 (IASGIGTWL) the chain is Periplasmic. Residues 75 to 95 (QVNRYGIVGSGLLSIQSVNFS) form a helical membrane-spanning segment. Topologically, residues 96–99 (FVTV) are cytoplasmic. A helical transmembrane segment spans residues 100-120 (MIALGSSMKSDGFHEELIMSS). Residues 121-139 (LLGVSFVGAFLVVGSSFIL) are Periplasmic-facing. Residues 140-160 (PYLRRVITPTVSGIVVLMIGL) traverse the membrane as a helical segment. Topologically, residues 161–170 (SLIKVGIIDF) are cytoplasmic. Residues 171–191 (GGGFAAKSSGTFGNYEHLGVG) traverse the membrane as a helical segment. Residues 192 to 199 (LLVLIVVI) are Periplasmic-facing. Residues 200-220 (GFNCCRSPLLRMGGIAIGLCV) form a helical membrane-spanning segment. Residues 221–229 (GYIASLCLG) are Cytoplasmic-facing. The helical transmembrane segment at 230–250 (MVDFSSMRNLPLITIPHPFKY) threads the bilayer. Topologically, residues 251-277 (GFSFSFHQFLVVGTIYLLSVLEAVGDI) are periplasmic. The helical transmembrane segment at 278–298 (TATAMVSRRPIQGEEYQSRLK) threads the bilayer. The Cytoplasmic portion of the chain corresponds to 299–317 (GGVLADGLVSVIASAVGSL). The helical transmembrane segment at 318 to 338 (PLTTFAQNNGVIQMTGVASRY) threads the bilayer. Residues 339 to 361 (VGRTIAVMLVILGLFPMIGGFFT) lie on the Periplasmic side of the membrane. Residues 362–382 (TIPSAVLGGAMTLMFSMIAIA) traverse the membrane as a helical segment. Position 383 (Gly383) is a topological domain, cytoplasmic. The helical transmembrane segment at 384–403 (IRIIITNGLKRRETLIVATS) threads the bilayer. The Periplasmic portion of the chain corresponds to 404–444 (LGLGLGVSYDPEIFKILPASIYVLVENPICAGGLTAILLNI). The chain crosses the membrane as a helical span at residues 445–465 (ILPGGYRQENVLPGITSAEEM). A topological domain (cytoplasmic) is located at residue Asp466.

The protein belongs to the nucleobase:cation symporter-2 (NCS2) (TC 2.A.40) family.

Its subcellular location is the cell inner membrane. The catalysed reaction is xanthine(in) + H(+)(in) = xanthine(out) + H(+)(out). Its function is as follows. Specific, proton motive force-dependent high-affinity transporter for xanthine. The polypeptide is Xanthine permease XanQ (xanQ) (Escherichia coli O157:H7).